The sequence spans 238 residues: MKYQPALQSATLLKRYKRFLADLQLSDGSEFTAHCANTGKMTGCAEPGFNAFYSTSTNSKRKYPQSLELTQNSLSQLICVNTAVANKVVAEAINANLISELSNYEQLQSEVKYGNENSRIDFLLTSDERPNCYVEVKSVTLLSQDNPHSGQGYFPDAPTLRGQKHIRELIEMVEQGHRAVLLFAVLHQGINQVSAAAHIDNKYAQLLNEAINQGVEVLAYKADISTNEIILKEKLPFI.

The protein belongs to the SfsA family.

The chain is Sugar fermentation stimulation protein homolog from Pseudoalteromonas translucida (strain TAC 125).